The sequence spans 104 residues: Large ribosomal subunit protein uL15z (104 aa).

Belongs to the universal ribosomal protein uL15 family.

The chain is Large ribosomal subunit protein uL15z (RPL27AA) from Arabidopsis thaliana (Mouse-ear cress).